Here is a 492-residue protein sequence, read N- to C-terminus: Pre-mRNA-splicing factor sap61 (492 aa).

A C2H2-type zinc finger spans residues 243 to 267 (FYCEVCQKFFGKITVFEAHKKSKAH). Disordered regions lie at residues 268-291 (NKAVKRMQSSSPSTTSNTNEKQKG) and 337-365 (AAEREAFEQSTPSVSVEGNQDEESDQDDE). The span at 276-286 (SSSPSTTSNTN) shows a compositional bias: low complexity. Residues 345 to 354 (QSTPSVSVEG) are compositionally biased toward polar residues. The span at 355–365 (NQDEESDQDDE) shows a compositional bias: acidic residues. At Ser-360 the chain carries Phosphoserine. The Matrin-type zinc finger occupies 397 to 428 (FPCEICGNYVYMGRKAFDKHFTEQRHIYGLKC).

Belongs to the SF3A3 family. As to quaternary structure, belongs to the 40S cdc5-associated complex (or cwf complex), a spliceosome sub-complex reminiscent of a late-stage spliceosome composed of the U2, U5 and U6 snRNAs and at least brr2, cdc5, cwf2/prp3, cwf3/syf1, cwf4/syf3, cwf5/ecm2, spp42/cwf6, cwf7/spf27, cwf8, cwf9, cwf10, cwf11, cwf12, prp45/cwf13, cwf14, cwf15, cwf16, cwf17, cwf18, cwf19, cwf20, cwf21, cwf22, cwf23, cwf24, cwf25, cwf26, cyp7/cwf27, cwf28, cwf29/ist3, lea1, msl1, prp5/cwf1, prp10, prp12/sap130, prp17, prp22, sap61, sap62, sap114, sap145, slu7, smb1, smd1, smd3, smf1, smg1 and syf2.

The protein resides in the nucleus. Its subcellular location is the cytoplasm. In terms of biological role, involved in mRNA splicing where it associates with cdc5 and the other cwf proteins as part of the spliceosome. The protein is Pre-mRNA-splicing factor sap61 (sap61) of Schizosaccharomyces pombe (strain 972 / ATCC 24843) (Fission yeast).